We begin with the raw amino-acid sequence, 565 residues long: NAD-dependent malic enzyme (565 aa).

Tyr-104 acts as the Proton donor in catalysis. Arg-157 is a binding site for NAD(+). Lys-175 functions as the Proton acceptor in the catalytic mechanism. A divalent metal cation is bound by residues Glu-246, Asp-247, and Asp-270. Residues Asp-270 and Asn-418 each coordinate NAD(+).

This sequence belongs to the malic enzymes family. Homotetramer. Mg(2+) serves as cofactor. Mn(2+) is required as a cofactor.

It catalyses the reaction (S)-malate + NAD(+) = pyruvate + CO2 + NADH. The enzyme catalyses oxaloacetate + H(+) = pyruvate + CO2. The chain is NAD-dependent malic enzyme from Erwinia tasmaniensis (strain DSM 17950 / CFBP 7177 / CIP 109463 / NCPPB 4357 / Et1/99).